Consider the following 262-residue polypeptide: MFLFSRKTRTPISTYSDSYRAPTSIKEVYKDPPLCAWEANKFLTPGLTHTMERHVDPEALQKMAKCAVQDYTYRGSISGHPYLPEKYWLSQEEADKCSPNYLGSDWYNTWRMEPYNSSCCNKYTTYLPRLPKEARMETAVRGMPLECPPRPERLNAYEREVMVNMLNSLSRNQQLPRITPRCGCVDPLPGRLPFHGYESACSGRHYCLRGMDYYASGAPCTDRRLRPWCREQPTMCTSLRAPARNAVCCYNSPAVILPISEP.

Belongs to the SPMIP6 family. As to quaternary structure, microtubule inner protein component of sperm flagellar doublet microtubules. Interacts with alpha-tubulin. Expressed in testis. Strongly expressed in ciliated epithelial cells with lower levels in goblet cells (at protein level).

Its subcellular location is the cytoplasm. The protein localises to the cytoskeleton. The protein resides in the nucleus. It is found in the mitochondrion. It localises to the flagellum axoneme. In terms of biological role, may participate in intramanchette transport and midpiece formation of the sperm tail. May play a potential role in somatic cell proliferation. The protein is Sperm microtubule inner protein 6 of Homo sapiens (Human).